Reading from the N-terminus, the 599-residue chain is Cytochrome P450 monooxygenase ALT8 (599 aa).

Helical transmembrane passes span 4 to 21 (LACV…VYLG) and 36 to 56 (ILFG…PAYF). N-linked (GlcNAc...) asparagine glycosylation occurs at Asn-127. The span at 495–504 (DDSSAASPSF) shows a compositional bias: low complexity. Residues 495–522 (DDSSAASPSFGGSGKRKSQYTDTHKEPS) are disordered. Heme is bound at residue Cys-539.

The protein belongs to the cytochrome P450 family. Requires heme as cofactor.

Its subcellular location is the membrane. It participates in secondary metabolite biosynthesis. In terms of biological role, cytochrome P450 monooxygenase; part of the gene cluster that mediates the biosynthesis of the host-selective toxins (HSTs) AAL-toxins, sphinganine-analog mycotoxins responsible for Alternaria stem canker on tomato by the tomato pathotype. The biosynthesis starts with the polyketide synthase ALT1-catalyzed C-16 carbon chain assembly from one starter acetyl-CoA unit with malonyl-CoA extender units. ALT1 also selectively transfers methyl groups at the first and the third cycle of chain elongation for AAL toxin. The C-16 polyketide chain is released from the enzyme by a nucleophilic attack of a carbanion, which is derived from R-carbon of glycin by decarboxylation, on the carbonyl carbon of polyketide acyl chain. This step is probably catalyzed by a pyridoxal 5'-phosphate-dependent aminoacyl transferase ALT4. The respective functions of the other enzymes encoded by the cluster have still to be elucidated. The sphingosine N-acyltransferase-like protein ALT7 seems not to act as a resistance/self-tolerance factor against the toxin in the toxin biosynthetic gene cluster, contrary to what is expected. The polypeptide is Cytochrome P450 monooxygenase ALT8 (Alternaria alternata (Alternaria rot fungus)).